A 218-amino-acid polypeptide reads, in one-letter code: Adenylate kinase (218 aa).

10–15 (GAGKGT) contacts ATP. Positions 30–59 (STGDMFRAAMANQTEMGRLAKSFIDKGELV) are NMP. AMP is bound by residues Thr-31, Arg-36, 57–59 (ELV), 86–89 (GYPR), and Gln-93. Residues 127–165 (GRFICRSCGSTYHKVFNPTKVEGTCDVCGGHEFFQREDD) are LID. Arg-128 provides a ligand contact to ATP. Zn(2+) is bound by residues Cys-131 and Cys-134. ATP is bound at residue 137–138 (TY). Zn(2+) contacts are provided by Cys-151 and Cys-154. Arg-162 and Arg-173 together coordinate AMP. Position 201 (Gln-201) interacts with ATP.

This sequence belongs to the adenylate kinase family. In terms of assembly, monomer.

Its subcellular location is the cytoplasm. The enzyme catalyses AMP + ATP = 2 ADP. It participates in purine metabolism; AMP biosynthesis via salvage pathway; AMP from ADP: step 1/1. Functionally, catalyzes the reversible transfer of the terminal phosphate group between ATP and AMP. Plays an important role in cellular energy homeostasis and in adenine nucleotide metabolism. The polypeptide is Adenylate kinase (Streptococcus thermophilus (strain CNRZ 1066)).